The following is a 215-amino-acid chain: Large ribosomal subunit protein uL1 (215 aa).

The protein belongs to the universal ribosomal protein uL1 family. In terms of assembly, part of the 50S ribosomal subunit.

In terms of biological role, binds directly to 23S rRNA. Probably involved in E site tRNA release. Functionally, protein L1 is also a translational repressor protein, it controls the translation of its operon by binding to its mRNA. This chain is Large ribosomal subunit protein uL1, found in Staphylothermus marinus (strain ATCC 43588 / DSM 3639 / JCM 9404 / F1).